The chain runs to 187 residues: Peptidyl-tRNA hydrolase (187 aa).

Tyr-14 is a tRNA binding site. Catalysis depends on His-19, which acts as the Proton acceptor. TRNA contacts are provided by Tyr-64 and Asn-66.

Belongs to the PTH family. Monomer.

It localises to the cytoplasm. It carries out the reaction an N-acyl-L-alpha-aminoacyl-tRNA + H2O = an N-acyl-L-amino acid + a tRNA + H(+). Hydrolyzes ribosome-free peptidyl-tRNAs (with 1 or more amino acids incorporated), which drop off the ribosome during protein synthesis, or as a result of ribosome stalling. Its function is as follows. Catalyzes the release of premature peptidyl moieties from peptidyl-tRNA molecules trapped in stalled 50S ribosomal subunits, and thus maintains levels of free tRNAs and 50S ribosomes. The sequence is that of Peptidyl-tRNA hydrolase from Carboxydothermus hydrogenoformans (strain ATCC BAA-161 / DSM 6008 / Z-2901).